Here is a 325-residue protein sequence, read N- to C-terminus: Histone-lysine N-methyltransferase ATXR4 (325 aa).

An N-terminal signal peptide occupies residues 1-30 (MSRLALNRYSRCFSRLKTLTTPLFFSSSAA). Residues 42-295 (PPIRVGLTES…EGEELRICYI (254 aa)) enclose the SET domain.

The protein belongs to the class V-like SAM-binding methyltransferase superfamily. Histone-lysine methyltransferase family. TRX/MLL subfamily.

The protein resides in the nucleus. The catalysed reaction is L-lysyl-[histone] + S-adenosyl-L-methionine = N(6)-methyl-L-lysyl-[histone] + S-adenosyl-L-homocysteine + H(+). Functionally, histone methyltransferase. This Arabidopsis thaliana (Mouse-ear cress) protein is Histone-lysine N-methyltransferase ATXR4 (ATXR4).